The primary structure comprises 309 residues: Protein FdhE (309 aa).

It belongs to the FdhE family.

The protein localises to the cytoplasm. In terms of biological role, necessary for formate dehydrogenase activity. This Escherichia coli O127:H6 (strain E2348/69 / EPEC) protein is Protein FdhE.